The chain runs to 70 residues: U2-agatoxin-Ao1j (70 aa).

The N-terminal stretch at Met-1–Ala-20 is a signal peptide. Residues Val-21–Arg-34 constitute a propeptide that is removed on maturation. 3 cysteine pairs are disulfide-bonded: Cys-37–Cys-53, Cys-44–Cys-58, and Cys-52–Cys-68. Leu-69 bears the Leucine amide mark.

This sequence belongs to the neurotoxin 01 (U2-agtx) family. As to expression, expressed by the venom gland.

Its subcellular location is the secreted. Insect active toxin causing rapid but reversible paralysis in crickets. No activity shown in mammals. Does not show effect on mammalian voltage-gated calcium channels. In Agelena orientalis (Funnel-web spider), this protein is U2-agatoxin-Ao1j.